The chain runs to 182 residues: tRNA-splicing endonuclease (182 aa).

Catalysis depends on residues Tyr119, His127, and Lys158.

Belongs to the tRNA-intron endonuclease family. Archaeal short subfamily. In terms of assembly, homotetramer; although the tetramer contains four active sites, only two participate in the cleavage. Therefore, it should be considered as a dimer of dimers.

It carries out the reaction pretRNA = a 3'-half-tRNA molecule with a 5'-OH end + a 5'-half-tRNA molecule with a 2',3'-cyclic phosphate end + an intron with a 2',3'-cyclic phosphate and a 5'-hydroxyl terminus.. Endonuclease that removes tRNA introns. Cleaves pre-tRNA at the 5'- and 3'-splice sites to release the intron. The products are an intron and two tRNA half-molecules bearing 2',3' cyclic phosphate and 5'-OH termini. Recognizes a pseudosymmetric substrate in which 2 bulged loops of 3 bases are separated by a stem of 4 bp. The protein is tRNA-splicing endonuclease of Saccharolobus islandicus (strain M.16.27) (Sulfolobus islandicus).